The chain runs to 87 residues: Toxin CsEv3 (87 aa).

An N-terminal signal peptide occupies residues 1–19; that stretch reads MNSLLMITACLFLIGTVWA. Residues 20–85 form the LCN-type CS-alpha/beta domain; that stretch reads KEGYLVNKST…TYPLPNKSCG (66 aa). 4 disulfide bridges follow: C31–C84, C35–C60, C44–C65, and C48–C67. A Cysteine amide modification is found at C84.

The protein belongs to the long (4 C-C) scorpion toxin superfamily. Sodium channel inhibitor family. Beta subfamily. As to expression, expressed by the venom gland.

Its subcellular location is the secreted. Functionally, beta toxins bind voltage-independently at site-4 of sodium channels (Nav) and shift the voltage of activation toward more negative potentials thereby affecting sodium channel activation and promoting spontaneous and repetitive firing. Induces immediate paralysis in crickets after injection, with a total paralysis occurring within 15-30 minutes and lasting for 1-2 hours. Is also lethal to vertebrate (chicks) when injected in very high dosages (more that 100 mg/kg). The polypeptide is Toxin CsEv3 (Centruroides sculpturatus (Arizona bark scorpion)).